The following is a 212-amino-acid chain: External core antigen (212 aa).

Residues 1-19 form the signal peptide; the sequence is MQLFHLCLIISCSCPTVQA. Residues 25-27 form an HBEAG region; it reads GWL. The segment at 172–212 is disordered; sequence LPETAVVRRRGRSPRRRTPSPRRRRSQSPRRRRSQSPASQC. The segment covering 178–205 has biased composition (basic residues); sequence VRRRGRSPRRRTPSPRRRRSQSPRRRRS. One copy of the 1; half-length repeat lies at 184–190; that stretch reads SPRRRTP. Residues 184-206 are 3 X 8 AA repeats of S-P-R-R-R-R-S-Q; sequence SPRRRTPSPRRRRSQSPRRRRSQ. The propeptide occupies 184-212; it reads SPRRRTPSPRRRRSQSPRRRRSQSPASQC. 2 repeat units span residues 191-198 and 199-206.

It belongs to the orthohepadnavirus precore antigen family. Homodimerizes. In terms of processing, phosphorylated. Post-translationally, cleaved by host furin.

The protein localises to the secreted. The protein resides in the host nucleus. Functionally, may regulate immune response to the intracellular capsid in acting as a T-cell tolerogen, by having an immunoregulatory effect which prevents destruction of infected cells by cytotoxic T-cells. This immune regulation may predispose to chronicity during perinatal infections and prevent severe liver injury during adult infections. This is External core antigen from Gorilla gorilla (western gorilla).